We begin with the raw amino-acid sequence, 456 residues long: Bifunctional protein GlmU (456 aa).

Residues 1 to 228 (MPQNTLNIVI…SHLAAGVNNK (228 aa)) are pyrophosphorylase. Residues 11-14 (LAAG), Lys25, Gln75, 80-81 (GT), 102-104 (YGD), Gly138, Glu153, Asn168, and Asn226 contribute to the UDP-N-acetyl-alpha-D-glucosamine site. Residue Asp104 coordinates Mg(2+). Asn226 is a Mg(2+) binding site. Residues 229–249 (LQLAELERIFQTEQAQELLKA) form a linker region. The tract at residues 250 to 456 (GVTLRDPARF…GWVRPEKNKQ (207 aa)) is N-acetyltransferase. UDP-N-acetyl-alpha-D-glucosamine is bound by residues Arg332 and Lys350. The active-site Proton acceptor is the His362. Positions 365 and 376 each coordinate UDP-N-acetyl-alpha-D-glucosamine. Acetyl-CoA contacts are provided by residues Ala379, 385 to 386 (NY), Ser404, Ala422, and Arg439.

The protein in the N-terminal section; belongs to the N-acetylglucosamine-1-phosphate uridyltransferase family. This sequence in the C-terminal section; belongs to the transferase hexapeptide repeat family. Homotrimer. The cofactor is Mg(2+).

The protein resides in the cytoplasm. It catalyses the reaction alpha-D-glucosamine 1-phosphate + acetyl-CoA = N-acetyl-alpha-D-glucosamine 1-phosphate + CoA + H(+). The catalysed reaction is N-acetyl-alpha-D-glucosamine 1-phosphate + UTP + H(+) = UDP-N-acetyl-alpha-D-glucosamine + diphosphate. It functions in the pathway nucleotide-sugar biosynthesis; UDP-N-acetyl-alpha-D-glucosamine biosynthesis; N-acetyl-alpha-D-glucosamine 1-phosphate from alpha-D-glucosamine 6-phosphate (route II): step 2/2. Its pathway is nucleotide-sugar biosynthesis; UDP-N-acetyl-alpha-D-glucosamine biosynthesis; UDP-N-acetyl-alpha-D-glucosamine from N-acetyl-alpha-D-glucosamine 1-phosphate: step 1/1. The protein operates within bacterial outer membrane biogenesis; LPS lipid A biosynthesis. Its function is as follows. Catalyzes the last two sequential reactions in the de novo biosynthetic pathway for UDP-N-acetylglucosamine (UDP-GlcNAc). The C-terminal domain catalyzes the transfer of acetyl group from acetyl coenzyme A to glucosamine-1-phosphate (GlcN-1-P) to produce N-acetylglucosamine-1-phosphate (GlcNAc-1-P), which is converted into UDP-GlcNAc by the transfer of uridine 5-monophosphate (from uridine 5-triphosphate), a reaction catalyzed by the N-terminal domain. In Neisseria meningitidis serogroup A / serotype 4A (strain DSM 15465 / Z2491), this protein is Bifunctional protein GlmU.